The sequence spans 274 residues: Large ribosomal subunit protein uL2 (274 aa).

The interval 223–257 is disordered; the sequence is VAMNPVDHPHGGGEGRTSGGRHPVTPWGIPTKGYK.

Belongs to the universal ribosomal protein uL2 family. In terms of assembly, part of the 50S ribosomal subunit. Forms a bridge to the 30S subunit in the 70S ribosome.

Functionally, one of the primary rRNA binding proteins. Required for association of the 30S and 50S subunits to form the 70S ribosome, for tRNA binding and peptide bond formation. It has been suggested to have peptidyltransferase activity; this is somewhat controversial. Makes several contacts with the 16S rRNA in the 70S ribosome. The sequence is that of Large ribosomal subunit protein uL2 from Geobacter sulfurreducens (strain ATCC 51573 / DSM 12127 / PCA).